A 215-amino-acid chain; its full sequence is tRNA (guanine-N(7)-)-methyltransferase (215 aa).

Residues glutamate 44, glutamate 69, aspartate 96, and aspartate 118 each contribute to the S-adenosyl-L-methionine site. Aspartate 118 is an active-site residue. Substrate-binding positions include lysine 122, aspartate 154, and 192-195 (TEYE).

Belongs to the class I-like SAM-binding methyltransferase superfamily. TrmB family.

It carries out the reaction guanosine(46) in tRNA + S-adenosyl-L-methionine = N(7)-methylguanosine(46) in tRNA + S-adenosyl-L-homocysteine. Its pathway is tRNA modification; N(7)-methylguanine-tRNA biosynthesis. In terms of biological role, catalyzes the formation of N(7)-methylguanine at position 46 (m7G46) in tRNA. The polypeptide is tRNA (guanine-N(7)-)-methyltransferase (Levilactobacillus brevis (strain ATCC 367 / BCRC 12310 / CIP 105137 / JCM 1170 / LMG 11437 / NCIMB 947 / NCTC 947) (Lactobacillus brevis)).